A 268-amino-acid polypeptide reads, in one-letter code: Ribonuclease P protein subunit p30 (268 aa).

Ala2 is subject to N-acetylalanine. Ser251 is subject to Phosphoserine.

It belongs to the eukaryotic/archaeal RNase P protein component 3 family. As to quaternary structure, component of nuclear RNase P and RNase MRP ribonucleoproteins. RNase P consists of a catalytic RNA moiety and about 10 protein subunits; POP1, POP4, POP5, POP7, RPP14, RPP21, RPP25, RPP30, RPP38 and RPP40. Within the RNase P complex, POP1, POP7 and RPP25 form the 'finger' subcomplex, POP5, RPP14, RPP40 and homodimeric RPP30 form the 'palm' subcomplex, and RPP21, POP4 and RPP38 form the 'wrist' subcomplex. All subunits of the RNase P complex interact with the catalytic RNA. Several subunits of RNase P are also part of the RNase MRP complex. RNase MRP consists of a catalytic RNA moiety and about 8 protein subunits; POP1, POP7, RPP25, RPP30, RPP38, RPP40 and possibly also POP4 and POP5.

It localises to the nucleus. Its subcellular location is the nucleolus. Component of ribonuclease P, a ribonucleoprotein complex that generates mature tRNA molecules by cleaving their 5'-ends. Also a component of the MRP ribonuclease complex, which cleaves pre-rRNA sequences. The sequence is that of Ribonuclease P protein subunit p30 (Rpp30) from Mus musculus (Mouse).